Reading from the N-terminus, the 289-residue chain is Enoyl-CoA delta isomerase 1, mitochondrial (289 aa).

Residues 1–28 (MALAAARRVLLQAGSRLGRRGAVDGARR) constitute a mitochondrion transit peptide. N6-acetyllysine; alternate is present on Lys48. N6-succinyllysine; alternate is present on Lys48. Position 71 is an N6-succinyllysine (Lys71). Position 76 is an N6-acetyllysine (Lys76). Substrate is bound by residues 93 to 97 (AGLDL), Gly140, and Asn164. An N6-acetyllysine; alternate mark is found at Lys222, Lys229, and Lys255. An N6-succinyllysine; alternate mark is found at Lys222, Lys229, and Lys255. Lys275 carries the N6-succinyllysine modification. At Lys283 the chain carries N6-acetyllysine; alternate. Position 283 is an N6-succinyllysine; alternate (Lys283).

The protein belongs to the enoyl-CoA hydratase/isomerase family. In terms of assembly, homotrimer.

Its subcellular location is the mitochondrion matrix. The catalysed reaction is a (3Z)-enoyl-CoA = a 4-saturated (2E)-enoyl-CoA. The enzyme catalyses a (3E)-enoyl-CoA = a 4-saturated (2E)-enoyl-CoA. It catalyses the reaction (3Z)-octenoyl-CoA = (2E)-octenoyl-CoA. It carries out the reaction (2E)-tetradecenoyl-CoA = (3Z)-tetradecenoyl-CoA. The catalysed reaction is (3Z)-dodecenoyl-CoA = (2E)-dodecenoyl-CoA. The enzyme catalyses (3Z)-hexenoyl-CoA = (2E)-hexenoyl-CoA. It catalyses the reaction (3Z)-decenoyl-CoA = (2E)-decenoyl-CoA. It functions in the pathway lipid metabolism; fatty acid beta-oxidation. Its function is as follows. Key enzyme of fatty acid beta-oxidation. Able to isomerize both 3-cis (3Z) and 3-trans (3E) double bonds into the 2-trans (2E) form in a range of enoyl-CoA species, with a preference for (3Z)-enoyl-CoAs over (3E)-enoyl-CoAs. The catalytic efficiency of this enzyme is not affected by the fatty acyl chain length. The sequence is that of Enoyl-CoA delta isomerase 1, mitochondrial from Rattus norvegicus (Rat).